Reading from the N-terminus, the 228-residue chain is Transcription termination/antitermination protein NusG (228 aa).

This sequence belongs to the NusG family.

Its function is as follows. Participates in transcription elongation, termination and antitermination. The chain is Transcription termination/antitermination protein NusG from Mycobacterium leprae (strain TN).